Reading from the N-terminus, the 402-residue chain is Phosphoglycerate kinase (402 aa).

Substrate contacts are provided by residues 24-26, arginine 40, 63-66, arginine 122, and arginine 155; these read DFN and HFGR. Residues lysine 206, glycine 297, glutamate 328, and 357 to 360 each bind ATP; that span reads GGDS.

This sequence belongs to the phosphoglycerate kinase family. In terms of assembly, monomer.

The protein resides in the cytoplasm. It carries out the reaction (2R)-3-phosphoglycerate + ATP = (2R)-3-phospho-glyceroyl phosphate + ADP. Its pathway is carbohydrate degradation; glycolysis; pyruvate from D-glyceraldehyde 3-phosphate: step 2/5. The polypeptide is Phosphoglycerate kinase (Synechococcus sp. (strain WH7803)).